Reading from the N-terminus, the 503-residue chain is Probable cytosol aminopeptidase (503 aa).

Mn(2+)-binding residues include K270 and D275. The active site involves K282. Mn(2+) is bound by residues D293, D352, and E354. R356 is an active-site residue.

It belongs to the peptidase M17 family. Requires Mn(2+) as cofactor.

Its subcellular location is the cytoplasm. The enzyme catalyses Release of an N-terminal amino acid, Xaa-|-Yaa-, in which Xaa is preferably Leu, but may be other amino acids including Pro although not Arg or Lys, and Yaa may be Pro. Amino acid amides and methyl esters are also readily hydrolyzed, but rates on arylamides are exceedingly low.. It carries out the reaction Release of an N-terminal amino acid, preferentially leucine, but not glutamic or aspartic acids.. Its function is as follows. Presumably involved in the processing and regular turnover of intracellular proteins. Catalyzes the removal of unsubstituted N-terminal amino acids from various peptides. The polypeptide is Probable cytosol aminopeptidase (Shigella boydii serotype 18 (strain CDC 3083-94 / BS512)).